The sequence spans 257 residues: 3-deoxy-manno-octulosonate cytidylyltransferase (257 aa).

The protein belongs to the KdsB family.

It is found in the cytoplasm. It catalyses the reaction 3-deoxy-alpha-D-manno-oct-2-ulosonate + CTP = CMP-3-deoxy-beta-D-manno-octulosonate + diphosphate. Its pathway is nucleotide-sugar biosynthesis; CMP-3-deoxy-D-manno-octulosonate biosynthesis; CMP-3-deoxy-D-manno-octulosonate from 3-deoxy-D-manno-octulosonate and CTP: step 1/1. It participates in bacterial outer membrane biogenesis; lipopolysaccharide biosynthesis. In terms of biological role, activates KDO (a required 8-carbon sugar) for incorporation into bacterial lipopolysaccharide in Gram-negative bacteria. This Methylobacillus flagellatus (strain ATCC 51484 / DSM 6875 / VKM B-1610 / KT) protein is 3-deoxy-manno-octulosonate cytidylyltransferase.